The following is a 160-amino-acid chain: 6,7-dimethyl-8-ribityllumazine synthase (160 aa).

Residues phenylalanine 23, 61–63 (SFE), and 85–87 (AVI) contribute to the 5-amino-6-(D-ribitylamino)uracil site. 90–91 (DT) serves as a coordination point for (2S)-2-hydroxy-3-oxobutyl phosphate. Histidine 93 (proton donor) is an active-site residue. Residue phenylalanine 118 participates in 5-amino-6-(D-ribitylamino)uracil binding. Arginine 132 lines the (2S)-2-hydroxy-3-oxobutyl phosphate pocket.

The protein belongs to the DMRL synthase family.

The enzyme catalyses (2S)-2-hydroxy-3-oxobutyl phosphate + 5-amino-6-(D-ribitylamino)uracil = 6,7-dimethyl-8-(1-D-ribityl)lumazine + phosphate + 2 H2O + H(+). The protein operates within cofactor biosynthesis; riboflavin biosynthesis; riboflavin from 2-hydroxy-3-oxobutyl phosphate and 5-amino-6-(D-ribitylamino)uracil: step 1/2. In terms of biological role, catalyzes the formation of 6,7-dimethyl-8-ribityllumazine by condensation of 5-amino-6-(D-ribitylamino)uracil with 3,4-dihydroxy-2-butanone 4-phosphate. This is the penultimate step in the biosynthesis of riboflavin. This is 6,7-dimethyl-8-ribityllumazine synthase from Synechococcus sp. (strain CC9605).